The chain runs to 553 residues: Probable cytochrome P450 301a1, mitochondrial (553 aa).

Cysteine 502 provides a ligand contact to heme.

It belongs to the cytochrome P450 family. The cofactor is heme.

The protein resides in the mitochondrion membrane. The protein is Probable cytochrome P450 301a1, mitochondrial (Cyp301a1) of Drosophila melanogaster (Fruit fly).